Here is a 778-residue protein sequence, read N- to C-terminus: MATLADIGLAAAINILSALIFLLLFAILRIQPFNDRVYFPKWYLKGVRSSPVNSGAFVSKIMNLDFRSYVRFLNWMPDALKMPEPELIDHAGLDSAVYLRIYLIGLKIFGPIALLSWSILVPVNWTSDGLQLAKLRNVTSSNIDKLSISNVERGSDRFWAHLVMAYAFTFWTCYVLMKEYEKIAAMRLSFLQSEKRRADQFTVLVRNVPPDSDESISENVQHFFLVNHPDHYLTHQVVYNANELAKLVEDKKKMQNWLDYYQLKYTRNKEQRPRVKMGFLGLWGKKVDAMDHYTAEIEKLSEQIMEERKRIKKDDKSVMQAAFVSFKTRWGAAVCAQTQQTKNPTEWLTEWAPEAREMYWPNLAMPYVSLTVRRFVMHIAFFFLTFFFIIPIAFVQSLASIEGIEKSAPFLSPIVKNKLMKSLIQGFLPGIVLKLFLIFLPTILMIMSKFEGFISISSLERRAAFRYYIFNLVNVFLGSVITGSAFEQLDSFLKQSANDIPRTVGVAIPIKATFFITYIMVDGWAGVAGEIFRLKPLVIFHLKNFFFVKTEKDREEAMDPGQIDFYATEPRIQLYFLLGLVYAPVTPVLLPFIIFFFGFAYLVFRHQIINVYNQKYESAGAFWPDVHGRIISALIISQILLLGLMSTKGKVQSTPFLLVLAILTFGFHRFCKGRYESAFVINPLQEAMIKDTLERAREPNLNLKGFLQNAYVHPVFKDEEDSDEEGLIEDSDDEDCVVVQTKRQRSRRTTVASSNASRGSSQSTPFNQLDLGKGKPET.

The next 10 membrane-spanning stretches (helical) occupy residues 7-27, 101-121, 158-178, 375-395, 427-447, 467-487, 512-532, 584-604, 626-646, and 651-671; these read IGLAAAINILSALIFLLLFAI, IYLIGLKIFGPIALLSWSILV, FWAHLVMAYAFTFWTCYVLMK, FVMHIAFFFLTFFFIIPIAFV, FLPGIVLKLFLIFLPTILMIM, YYIFNLVNVFLGSVITGSAFE, ATFFITYIMVDGWAGVAGEIF, PVTPVLLPFIIFFFGFAYLVF, VHGRIISALIISQILLLGLMS, and VQSTPFLLVLAILTFGFHRFC. Residues 738–778 form a disordered region; the sequence is VVQTKRQRSRRTTVASSNASRGSSQSTPFNQLDLGKGKPET. Residues 753–763 show a composition bias toward low complexity; it reads SSNASRGSSQS.

Belongs to the CSC1 (TC 1.A.17) family.

It localises to the membrane. Acts as an osmosensitive calcium-permeable cation channel. This chain is Hyperosmolality-gated Ca2+ permeable channel 1.4, found in Arabidopsis thaliana (Mouse-ear cress).